The primary structure comprises 523 residues: Anthranilate synthase component 1 (523 aa).

Residues Ser45 and 296-298 (PYM) contribute to the L-tryptophan site. 333-334 (GT) provides a ligand contact to chorismate. A Mg(2+)-binding site is contributed by Glu366. Chorismate-binding positions include Tyr454, Arg474, 488–490 (GAG), and Gly490. Position 503 (Glu503) interacts with Mg(2+).

This sequence belongs to the anthranilate synthase component I family. In terms of assembly, heterotetramer consisting of two non-identical subunits: a beta subunit (TrpG) and a large alpha subunit (TrpE). It depends on Mg(2+) as a cofactor.

The enzyme catalyses chorismate + L-glutamine = anthranilate + pyruvate + L-glutamate + H(+). The protein operates within amino-acid biosynthesis; L-tryptophan biosynthesis; L-tryptophan from chorismate: step 1/5. Its activity is regulated as follows. Feedback inhibited by tryptophan. Part of a heterotetrameric complex that catalyzes the two-step biosynthesis of anthranilate, an intermediate in the biosynthesis of L-tryptophan. In the first step, the glutamine-binding beta subunit (TrpG) of anthranilate synthase (AS) provides the glutamine amidotransferase activity which generates ammonia as a substrate that, along with chorismate, is used in the second step, catalyzed by the large alpha subunit of AS (TrpE) to produce anthranilate. In the absence of TrpG, TrpE can synthesize anthranilate directly from chorismate and high concentrations of ammonia. This Vibrio cholerae serotype O1 (strain ATCC 39315 / El Tor Inaba N16961) protein is Anthranilate synthase component 1 (trpE).